A 607-amino-acid polypeptide reads, in one-letter code: Guanine nucleotide-binding protein-like 1 (607 aa).

A compositionally biased stretch (basic residues) spans 1 to 14 (MPRKKPFSVKQKKK). The tract at residues 1–81 (MPRKKPFSVK…GPRGYDPNRY (81 aa)) is disordered. Over residues 15-26 (QLQDKRERKRGL) the composition is skewed to basic and acidic residues. Phosphoserine occurs at positions 32, 33, and 34. 2 positions are modified to phosphothreonine: threonine 48 and threonine 50. A phosphoserine mark is found at serine 51 and serine 68. A CP-type G domain is found at 178–418 (WRQLWRVLEM…LCDCPGLIFP (241 aa)). 225–228 (NKVD) is a binding site for GTP. At serine 324 the chain carries Phosphoserine. Residues 367–374 (GFPNVGKS) and 411–415 (DCPGL) each bind GTP. Positions 547-607 (GPAGDEEEEE…PYALLGEDEC (61 aa)) are disordered. Over residues 550-584 (GDEEEEEEEELSSSCEEEGEEDRDADEEGEGDEET) the composition is skewed to acidic residues. A phosphoserine mark is found at serine 561, serine 562, and serine 563.

Belongs to the TRAFAC class YlqF/YawG GTPase family.

Possible regulatory or functional link with the histocompatibility cluster. This is Guanine nucleotide-binding protein-like 1 (GNL1) from Pan troglodytes (Chimpanzee).